The following is a 340-amino-acid chain: MYG1 protein C27H6.8 (340 aa).

Belongs to the MYG1 family.

The polypeptide is MYG1 protein C27H6.8 (Caenorhabditis elegans).